Consider the following 740-residue polypeptide: Catalase-peroxidase (740 aa).

The first 27 residues, M1 to A27, serve as a signal peptide directing secretion. A cross-link (tryptophyl-tyrosyl-methioninium (Trp-Tyr) (with M-254)) is located at residues W106–Y228. Catalysis depends on H107, which acts as the Proton acceptor. The segment at residues Y228–M254 is a cross-link (tryptophyl-tyrosyl-methioninium (Tyr-Met) (with W-106)). H269 serves as a coordination point for heme b.

Belongs to the peroxidase family. Peroxidase/catalase subfamily. Homodimer or homotetramer. Requires heme b as cofactor. Post-translationally, formation of the three residue Trp-Tyr-Met cross-link is important for the catalase, but not the peroxidase activity of the enzyme.

The enzyme catalyses H2O2 + AH2 = A + 2 H2O. It carries out the reaction 2 H2O2 = O2 + 2 H2O. Bifunctional enzyme with both catalase and broad-spectrum peroxidase activity. This chain is Catalase-peroxidase, found in Colwellia psychrerythraea (strain 34H / ATCC BAA-681) (Vibrio psychroerythus).